A 257-amino-acid polypeptide reads, in one-letter code: Spermidine/putrescine transport system permease protein PotC (257 aa).

Over Met1–Arg7 the chain is Cytoplasmic. Residues Asn8 to Thr27 traverse the membrane as a helical segment. Topologically, residues Asn28–Thr65 are periplasmic. In terms of domain architecture, ABC transmembrane type-1 spans Ala60–Ser248. Residues Ile66–Leu85 traverse the membrane as a helical segment. The Cytoplasmic portion of the chain corresponds to Tyr86–Leu100. Residues Phe101 to Met120 traverse the membrane as a helical segment. The Periplasmic segment spans residues Val121–Phe128. Residues Trp129 to Phe148 form a helical membrane-spanning segment. The Cytoplasmic segment spans residues Ser149 to Ile176. A helical membrane pass occupies residues Ile177–Ser196. The Periplasmic portion of the chain corresponds to Leu197–Asn231. The helical transmembrane segment at Ala232–Ile251 threads the bilayer. The Cytoplasmic portion of the chain corresponds to Thr252 to His257.

It belongs to the binding-protein-dependent transport system permease family. CysTW subfamily.

Its subcellular location is the cell inner membrane. In terms of biological role, required for the activity of the bacterial periplasmic transport system of putrescine and spermidine. The polypeptide is Spermidine/putrescine transport system permease protein PotC (potC) (Haemophilus influenzae (strain ATCC 51907 / DSM 11121 / KW20 / Rd)).